Here is a 254-residue protein sequence, read N- to C-terminus: 3-oxo-5-alpha-steroid 4-dehydrogenase 2 (254 aa).

4 helical membrane passes run 8 to 28 (SPVLAGSATLVALGALVLYVA), 72 to 92 (PLSLFGPPGTVLLGLFCVHYF), 146 to 166 (FCLGVFLFILGMGVNIHSDYI), and 206 to 226 (LATWSLPALAFAFFSVCFLGL).

The protein belongs to the steroid 5-alpha reductase family.

It localises to the microsome membrane. Its subcellular location is the endoplasmic reticulum membrane. It carries out the reaction a 3-oxo-5alpha-steroid + NADP(+) = a 3-oxo-Delta(4)-steroid + NADPH + H(+). It catalyses the reaction 17beta-hydroxy-5alpha-androstan-3-one + NADP(+) = testosterone + NADPH + H(+). The enzyme catalyses 5alpha-pregnane-3,20-dione + NADP(+) = progesterone + NADPH + H(+). Converts testosterone (T) into 5-alpha-dihydrotestosterone (DHT) and progesterone or corticosterone into their corresponding 5-alpha-3-oxosteroids. It plays a central role in sexual differentiation and androgen physiology. This is 3-oxo-5-alpha-steroid 4-dehydrogenase 2 (SRD5A2) from Macaca fascicularis (Crab-eating macaque).